The chain runs to 453 residues: Allantoinase (453 aa).

Residues histidine 59, histidine 61, lysine 146, histidine 186, histidine 242, and aspartate 315 each coordinate Zn(2+). Position 146 is an N6-carboxylysine (lysine 146).

Belongs to the metallo-dependent hydrolases superfamily. Allantoinase family. Homotetramer. Zn(2+) serves as cofactor. Post-translationally, carboxylation allows a single lysine to coordinate two zinc ions.

It catalyses the reaction (S)-allantoin + H2O = allantoate + H(+). It participates in nitrogen metabolism; (S)-allantoin degradation; allantoate from (S)-allantoin: step 1/1. Functionally, catalyzes the conversion of allantoin (5-ureidohydantoin) to allantoic acid by hydrolytic cleavage of the five-member hydantoin ring. The sequence is that of Allantoinase from Salmonella paratyphi B (strain ATCC BAA-1250 / SPB7).